The sequence spans 87 residues: Translation initiation factor IF-1 2 (87 aa).

The 72-residue stretch at M1 to K72 folds into the S1-like domain.

The protein belongs to the IF-1 family. Component of the 30S ribosomal translation pre-initiation complex which assembles on the 30S ribosome in the order IF-2 and IF-3, IF-1 and N-formylmethionyl-tRNA(fMet); mRNA recruitment can occur at any time during PIC assembly.

It localises to the cytoplasm. In terms of biological role, one of the essential components for the initiation of protein synthesis. Stabilizes the binding of IF-2 and IF-3 on the 30S subunit to which N-formylmethionyl-tRNA(fMet) subsequently binds. Helps modulate mRNA selection, yielding the 30S pre-initiation complex (PIC). Upon addition of the 50S ribosomal subunit IF-1, IF-2 and IF-3 are released leaving the mature 70S translation initiation complex. The sequence is that of Translation initiation factor IF-1 2 from Burkholderia ambifaria (strain ATCC BAA-244 / DSM 16087 / CCUG 44356 / LMG 19182 / AMMD) (Burkholderia cepacia (strain AMMD)).